The sequence spans 130 residues: Small ribosomal subunit protein uS9 (130 aa).

The interval 102–130 (GFLTRDPRMKERKKYGLKKARRSPQFSKR) is disordered. Basic residues predominate over residues 111–130 (KERKKYGLKKARRSPQFSKR).

It belongs to the universal ribosomal protein uS9 family.

This is Small ribosomal subunit protein uS9 from Clostridium botulinum (strain ATCC 19397 / Type A).